A 604-amino-acid polypeptide reads, in one-letter code: MRRCTNIRPGETGMDVTSRCTLGDPNKLPEGVPQPARMPYISDKHPRQTLEVINLLRKHRELCDVVLVVGAKKIYAHRVILSACSPYFRAMFTGELAESRQTEVVIRDIDERAMELLIDFAYTSQITVEEGNVQTLLPAACLLQLAEIQEACCEFLKRQLDPSNCLGIRAFADTHSCRELLRIADKFTQHNFQEVMESEEFMLLPANQLIDIISSDELNVRSEEQVFNAVMAWVKYSIQERRPQLPQVLQHVRLPLLSPKFLVGTVGSDPLIKSDEECRDLVDEAKNYLLLPQERPLMQGPRTRPRKPIRCGEVLFAVGGWCSGDAISSVERYDPQTNEWRMVASMSKRRCGVGVSVLDDLLYAVGGHDGSSYLNSVERYDPKTNQWSSDVAPTSTCRTSVGVAVLGGFLYAVGGQDGVSCLNIVERYDPKENKWTRVASMSTRRLGVAVAVLGGFLYAVGGSDGTSPLNTVERYNPQENRWHTIAPMGTRRKHLGCAVYQDMIYAVGGRDDTTELSSAERYNPRTNQWSPVVAMTSRRSGVGLAVVNGQLMAVGGFDGTTYLKTIEVFDPDANTWRLYGGMNYRRLGGGVGVIKMTHCESHIW.

The BTB domain maps to 63–130; it reads CDVVLVVGAK…AYTSQITVEE (68 aa). A BACK domain is found at 165–267; the sequence is CLGIRAFADT…SPKFLVGTVG (103 aa). Kelch repeat units follow at residues 314–360, 362–408, 409–455, 457–502, 504–549, and 551–596; these read VLFA…VLDD, LYAV…VLGG, FLYA…VLGG, LYAV…VYQD, IYAV…VVNG, and LMAV…VIKM.

As to quaternary structure, component of the BCR(KLHL20) E3 ubiquitin ligase complex, at least composed of CUL3, KLHL20 and RBX1. Interacts with PDZ-RhoGEF/ARHGEF11, DAPK1, PML and CORO7. Interacts with F-actin. Interacts with IFN-gamma (IFNG). Interacts (via kelch repeats) with IVNS1ABP (via kelch repeats); this interaction blocks the assembly of CUL3-KLHL20 complex.

It localises to the cytoplasm. Its subcellular location is the perinuclear region. The protein resides in the nucleus. The protein localises to the golgi apparatus. It is found in the trans-Golgi network. It localises to the cell projection. Its subcellular location is the axon. The protein resides in the dendrite. It functions in the pathway protein modification; protein ubiquitination. In terms of biological role, substrate-specific adapter of a BCR (BTB-CUL3-RBX1) E3 ubiquitin-protein ligase complex involved in interferon response and anterograde Golgi to endosome transport. The BCR(KLHL20) E3 ubiquitin ligase complex mediates the ubiquitination of DAPK1, leading to its degradation by the proteasome, thereby acting as a negative regulator of apoptosis. The BCR(KLHL20) E3 ubiquitin ligase complex also specifically mediates 'Lys-33'-linked ubiquitination. Involved in anterograde Golgi to endosome transport by mediating 'Lys-33'-linked ubiquitination of CORO7, promoting interaction between CORO7 and EPS15, thereby facilitating actin polymerization and post-Golgi trafficking. Also acts as a regulator of endothelial migration during angiogenesis by controlling the activation of Rho GTPases. The BCR(KLHL20) E3 ubiquitin ligase complex acts as a regulator of neurite outgrowth by mediating ubiquitination and degradation of PDZ-RhoGEF/ARHGEF11. The protein is Kelch-like protein 20 (Klhl20) of Mus musculus (Mouse).